Reading from the N-terminus, the 588-residue chain is Lysophospholipase 2 (588 aa).

The tract at residues 15–38 is disordered; that stretch reads NRALPNAPDGYTPQGETCPSKRPS. The PLA2c domain maps to 31–574; that stretch reads TCPSKRPSIR…KTYCWNGTIN (544 aa). N-linked (GlcNAc...) asparagine glycans are attached at residues N41, N58, N77, N84, N88, N119, N123, N157, N167, N228, N272, N302, N340, N431, N449, N478, N481, N501, N510, N529, N553, N570, and N574.

It belongs to the lysophospholipase family.

It catalyses the reaction a 1-acyl-sn-glycero-3-phosphocholine + H2O = sn-glycerol 3-phosphocholine + a fatty acid + H(+). Its function is as follows. Catalyzes the release of fatty acids from lysophospholipids. The polypeptide is Lysophospholipase 2 (plb2) (Aspergillus fumigatus (strain ATCC MYA-4609 / CBS 101355 / FGSC A1100 / Af293) (Neosartorya fumigata)).